The following is a 366-amino-acid chain: Phosphate acyltransferase (366 aa).

Positions 334-366 (ESAKNKETQSKQASTKNTAPKTSETTKESQQSL) are disordered. A compositionally biased stretch (polar residues) spans 343–366 (SKQASTKNTAPKTSETTKESQQSL).

It belongs to the PlsX family. Homodimer. Probably interacts with PlsY.

The protein resides in the cytoplasm. The catalysed reaction is a fatty acyl-[ACP] + phosphate = an acyl phosphate + holo-[ACP]. It functions in the pathway lipid metabolism; phospholipid metabolism. Functionally, catalyzes the reversible formation of acyl-phosphate (acyl-PO(4)) from acyl-[acyl-carrier-protein] (acyl-ACP). This enzyme utilizes acyl-ACP as fatty acyl donor, but not acyl-CoA. This Onion yellows phytoplasma (strain OY-M) protein is Phosphate acyltransferase.